A 181-amino-acid chain; its full sequence is Der GTPase-activating protein YihI (181 aa).

The interval 1 to 73 is disordered; that stretch reads MSRIKKARKP…DPRIGSKKPI (73 aa). Basic and acidic residues predominate over residues 22-32; sequence NRTDRDVESRE. Over residues 33 to 42 the composition is skewed to basic residues; the sequence is LKRKRKRKGL. Residues 55-67 are compositionally biased toward basic and acidic residues; it reads QARRNAQKKDPRI.

Belongs to the YihI family. In terms of assembly, interacts with Der.

A GTPase-activating protein (GAP) that modifies Der/EngA GTPase function. May play a role in ribosome biogenesis. In Aliivibrio fischeri (strain MJ11) (Vibrio fischeri), this protein is Der GTPase-activating protein YihI.